A 333-amino-acid polypeptide reads, in one-letter code: G-protein coupled receptor 146 (333 aa).

The Extracellular segment spans residues 1 to 22; the sequence is MWSCGPLNSTAWAEEPLCRNLR. Residue Asn-8 is glycosylated (N-linked (GlcNAc...) asparagine). Residues 23-43 form a helical membrane-spanning segment; the sequence is LGLWVLSLLYLGAGVPVSLGY. Topologically, residues 44–64 are cytoplasmic; the sequence is NALLVLANLASKNTMTMPDVY. A helical transmembrane segment spans residues 65 to 85; sequence FVNMAVAGLVLTALAPAYLLG. Over 86–101 the chain is Extracellular; that stretch reads PAHSRWALWSLSSEAH. Residues 102–122 traverse the membrane as a helical segment; the sequence is VTLLILFNVASLVTMYSTALL. Residues 123–145 lie on the Cytoplasmic side of the membrane; sequence SLDYYIERALPRTYMASVYNTRH. Residues 146-166 traverse the membrane as a helical segment; sequence VCGFVWGGAVLTSFSSLLFYI. Residues 167 to 188 are Extracellular-facing; sequence CSHVSSRIAECARMQNTEAADA. A helical membrane pass occupies residues 189–209; that stretch reads ILVLIGYVVPGLAVLYALALI. Over 210-232 the chain is Cytoplasmic; that stretch reads SRIGKEDTPLDQDTSRLDPSVHR. Residues 233–253 traverse the membrane as a helical segment; that stretch reads LLVATVCTQFGLWTPYYLSLG. At 254–277 the chain is on the extracellular side; it reads HTVLTSRGRTVEGHYLGILQVAKD. A helical membrane pass occupies residues 278 to 298; sequence LAKFLAFSSSSVTPLLYRYIN. Residues 299–333 lie on the Cytoplasmic side of the membrane; sequence KAFPGKLRRLMKKMHCGRRHCSPDPSGIQQVMAQA.

Belongs to the G-protein coupled receptor 1 family.

The protein resides in the cell membrane. GPCR receptor required for the regulation of plasma cholesterol levels. Receptor for CHLSN, a gut derived hormone which mediates an inhibitory effect of intestinal cholesterol absorption on hepatic cholesterol synthesis. Cholesin-binding exerts an antagonistic effect by inhibiting PKA signaling and suppressing SREBF2-controlled cholesterol in the liver. This chain is G-protein coupled receptor 146 (Gpr146), found in Mus musculus (Mouse).